We begin with the raw amino-acid sequence, 553 residues long: Cytokine-like nuclear factor N-PAC (553 aa).

One can recognise a PWWP domain in the interval 8-66 (LGDLVWGKLGRYPPWPGKIVNPPKDLKKPRGKKCFFVKFFGTEDHAWIKVEQLKPYHLH). Basic and acidic residues-rich tracts occupy residues 92–145 (KTKG…EGKK) and 162–182 (RAQD…KDLT). The segment at 92 to 188 (KTKGKDQASS…KDLTIPESST (97 aa)) is disordered. Residues 168–180 (PRKRGRPPKDEKD) constitute a DNA-binding region (a.T hook). Residues 214–217 (DPHF) form an interaction with histone H3 region. The tract at residues 261–553 (GSITPTDKKI…MSAVYRAYIH (293 aa)) is dehydrogenase domain. NAD(+) contacts are provided by residues 271–285 (GFLG…IVSN), threonine 362, and lysine 505.

The protein belongs to the HIBADH-related family. NP60 subfamily. Homotetramere. Binds to mononucleosomes.

Its subcellular location is the nucleus. It is found in the chromosome. Functionally, cytokine-like nuclear factor with chromatin gene reader activity involved in chromatin modification and regulation of gene expression. Acts as a nucleosome-destabilizing factor that is recruited to genes during transcriptional activation. Recognizes and binds histone H3 without a preference for specific epigenetic markers and also binds DNA. Interacts with KDM1B and promotes its histone demethylase activity by facilitating the capture of H3 tails, they form a multifunctional enzyme complex that modifies transcribed chromatin and facilitates Pol II transcription through nucleosomes. The sequence is that of Cytokine-like nuclear factor N-PAC (GLYR1) from Gallus gallus (Chicken).